Here is a 356-residue protein sequence, read N- to C-terminus: MIRNSGRILFNSLKNSNVKLINRNVIINSNIRLFSTSTNNTIKESVEKKAETISNKDNIASPSSKSIDVSDLAGNADYNFVFERIKTCDKENYINSLLISDPIARRVAYAIRAFNIETVANDHSPKSEKISRLRLSFWKDAINNIYNGKVYDQPLTRVLAQVIKEKKLTKTWFIKILNRREKDNQQVQIKDMEELEQYADDIHSSLMLLTLEGLGVKGNHDVEHCASHLGKAIGIMVLIRGTVYHLASRKTYIPVSLTTKYGINVESLYRGDPQIEKLQNAIYEMASCAKLHLDKAKQFRGKIPHPATEAFLSVSVVEDFLERLRKADFNIFEFPNTQQHPLLLIKLYKNKFFKQF.

A mitochondrion-targeting transit peptide spans 1-41 (MIRNSGRILFNSLKNSNVKLINRNVIINSNIRLFSTSTNNT).

This sequence belongs to the NDUFAF6 family.

Its subcellular location is the mitochondrion inner membrane. Involved in the assembly of mitochondrial NADH:ubiquinone oxidoreductase complex (complex I) at early stages. In Dictyostelium discoideum (Social amoeba), this protein is NADH dehydrogenase (ubiquinone) complex I, assembly factor 6 homolog.